Consider the following 351-residue polypeptide: Phosphoribosylformylglycinamidine cyclo-ligase (351 aa).

This sequence belongs to the AIR synthase family.

It is found in the cytoplasm. The enzyme catalyses 2-formamido-N(1)-(5-O-phospho-beta-D-ribosyl)acetamidine + ATP = 5-amino-1-(5-phospho-beta-D-ribosyl)imidazole + ADP + phosphate + H(+). It participates in purine metabolism; IMP biosynthesis via de novo pathway; 5-amino-1-(5-phospho-D-ribosyl)imidazole from N(2)-formyl-N(1)-(5-phospho-D-ribosyl)glycinamide: step 2/2. The polypeptide is Phosphoribosylformylglycinamidine cyclo-ligase (Synechococcus sp. (strain JA-3-3Ab) (Cyanobacteria bacterium Yellowstone A-Prime)).